The primary structure comprises 328 residues: GTP 3',8-cyclase (328 aa).

Residues 1–229 enclose the Radical SAM core domain; the sequence is MNTVDYLRIS…ESFVPGNGPA (229 aa). Residue Arg8 participates in GTP binding. 2 residues coordinate [4Fe-4S] cluster: Cys15 and Cys19. Tyr21 lines the S-adenosyl-L-methionine pocket. Cys22 is a binding site for [4Fe-4S] cluster. Residue Arg60 participates in GTP binding. Gly64 lines the S-adenosyl-L-methionine pocket. GTP is bound at residue Thr91. Ser115 is an S-adenosyl-L-methionine binding site. GTP is bound at residue Lys155. Residue Met189 participates in S-adenosyl-L-methionine binding. Residues Cys252 and Cys255 each coordinate [4Fe-4S] cluster. A GTP-binding site is contributed by 257-259; that stretch reads RMR. Position 269 (Cys269) interacts with [4Fe-4S] cluster.

It belongs to the radical SAM superfamily. MoaA family. As to quaternary structure, monomer and homodimer. It depends on [4Fe-4S] cluster as a cofactor.

The enzyme catalyses GTP + AH2 + S-adenosyl-L-methionine = (8S)-3',8-cyclo-7,8-dihydroguanosine 5'-triphosphate + 5'-deoxyadenosine + L-methionine + A + H(+). The protein operates within cofactor biosynthesis; molybdopterin biosynthesis. Functionally, catalyzes the cyclization of GTP to (8S)-3',8-cyclo-7,8-dihydroguanosine 5'-triphosphate. In Trichodesmium erythraeum (strain IMS101), this protein is GTP 3',8-cyclase.